The sequence spans 224 residues: Probable octanoyltransferase (224 aa).

Positions 28–199 (GLTGDIALVT…KLALELGLTP (172 aa)) constitute a BPL/LPL catalytic domain. Residues 66-73 (RGGDATYH), 130-132 (SIG), and 143-145 (GVA) each bind substrate. The active-site Acyl-thioester intermediate is the cysteine 161.

The protein belongs to the LipB family.

It localises to the cytoplasm. The enzyme catalyses octanoyl-[ACP] + L-lysyl-[protein] = N(6)-octanoyl-L-lysyl-[protein] + holo-[ACP] + H(+). Its pathway is protein modification; protein lipoylation via endogenous pathway; protein N(6)-(lipoyl)lysine from octanoyl-[acyl-carrier-protein]: step 1/2. Catalyzes the transfer of endogenously produced octanoic acid from octanoyl-acyl-carrier-protein onto the lipoyl domains of lipoate-dependent enzymes. Lipoyl-ACP can also act as a substrate although octanoyl-ACP is likely to be the physiological substrate. The sequence is that of Probable octanoyltransferase from Pyrobaculum aerophilum (strain ATCC 51768 / DSM 7523 / JCM 9630 / CIP 104966 / NBRC 100827 / IM2).